A 288-amino-acid chain; its full sequence is Syntaxin-1A (288 aa).

Basic and acidic residues predominate over residues 1–13 (MKDRTQELRTAKD). The tract at residues 1-20 (MKDRTQELRTAKDSDDDDDV) is disordered. The Cytoplasmic portion of the chain corresponds to 1–265 (MKDRTQELRT…KYQSKARRKK (265 aa)). Phosphoserine is present on residues Ser-14, Ser-64, and Ser-95. Residues 68–109 (DEKTKEELEELMSDIKKTANKVRSKLKSIEQSIEQEEGLNRS) are a coiled coil. Position 188 is a phosphoserine; by DAPK1 (Ser-188). The region spanning 192–254 (LSEIETRHSE…ERAVSDTKKA (63 aa)) is the t-SNARE coiled-coil homology domain. Residues Lys-252, Lys-253, and Lys-256 each participate in a glycyl lysine isopeptide (Lys-Gly) (interchain with G-Cter in SUMO) cross-link. A helical; Anchor for type IV membrane protein membrane pass occupies residues 266–286 (IMIIICCVILGIIIASTIGGI). The Extracellular segment spans residues 287 to 288 (FG).

It belongs to the syntaxin family. In terms of assembly, part of the SNARE core complex containing SNAP25, VAMP2 and STX1A; this complex constitutes the basic catalytic machinery of the complex neurotransmitter release apparatus. The SNARE complex interacts with CPLX1. Interacts with STXBP1. The interaction with STXBP1 promotes assembly of the SNARE complex. Interacts (via C-terminus) with KCNB1 (via C-terminus); the interaction increases in a calcium-dependent manner and induces a pore-independent enhancement of exocytosis in neuroendocrine cells, chromaffin cells, pancreatic beta cells and from the soma of dorsal root ganglia (DRG) neurons. Interacts with SYTL4. Interacts with STXBP6. Interacts with PLCL1 (via C2 domain). Interacts with OTOF. Interacts with LGI3. Interacts (via the H3 domain) with SLC6A4 (via the N-terminus); this interaction regulates SLC4A6 channel conductance in thalamocortical neurons. Interacts with SYT6 and SYT8; the interaction is Ca(2+)-dependent. Interacts with VAMP8. Interacts with SNAP23. Interacts with VAPA and SYBU. Interacts with PRRT2. Interacts with SEPT8. Interacts with STXBP5L. Interacts with synaptotagmin-1/SYT1. Interacts with SEPTIN5; in the cerebellar cortex. Interacts with SEPTIN4; in the striatum. Post-translationally, phosphorylated by CK2. Phosphorylation at Ser-188 by DAPK1 significantly decreases its interaction with STXBP1. In terms of processing, phosphorylated by CK2. Phosphorylation at Ser-188 by DAPK1 significantly decreases its interaction with STXBP1. Sumoylated, sumoylation is required for regulation of synaptic vesicle endocytosis. As to expression, expressed in the striatum (at protein level). Expressed in the ileum.

It is found in the cytoplasmic vesicle. Its subcellular location is the secretory vesicle. The protein resides in the synaptic vesicle membrane. The protein localises to the synapse. It localises to the synaptosome. It is found in the cell membrane. Plays an essential role in hormone and neurotransmitter calcium-dependent exocytosis and endocytosis. Part of the SNARE (Soluble NSF Attachment Receptor) complex composed of SNAP25, STX1A and VAMP2 which mediates the fusion of synaptic vesicles with the presynaptic plasma membrane. STX1A and SNAP25 are localized on the plasma membrane while VAMP2 resides in synaptic vesicles. The pairing of the three SNAREs from the N-terminal SNARE motifs to the C-terminal anchors leads to the formation of the SNARE complex, which brings membranes into close proximity and results in final fusion. Participates in the calcium-dependent regulation of acrosomal exocytosis in sperm. Also plays an important role in the exocytosis of hormones such as insulin or glucagon-like peptide 1 (GLP-1). This is Syntaxin-1A (Stx1a) from Mus musculus (Mouse).